Consider the following 211-residue polypeptide: ATP phosphoribosyltransferase (211 aa).

Belongs to the ATP phosphoribosyltransferase family. Short subfamily. In terms of assembly, heteromultimer composed of HisG and HisZ subunits.

It is found in the cytoplasm. The enzyme catalyses 1-(5-phospho-beta-D-ribosyl)-ATP + diphosphate = 5-phospho-alpha-D-ribose 1-diphosphate + ATP. Its pathway is amino-acid biosynthesis; L-histidine biosynthesis; L-histidine from 5-phospho-alpha-D-ribose 1-diphosphate: step 1/9. Functionally, catalyzes the condensation of ATP and 5-phosphoribose 1-diphosphate to form N'-(5'-phosphoribosyl)-ATP (PR-ATP). Has a crucial role in the pathway because the rate of histidine biosynthesis seems to be controlled primarily by regulation of HisG enzymatic activity. This Lacticaseibacillus casei (strain BL23) (Lactobacillus casei) protein is ATP phosphoribosyltransferase.